We begin with the raw amino-acid sequence, 310 residues long: N-acetyl-gamma-glutamyl-phosphate reductase (310 aa).

The active site involves cysteine 117.

This sequence belongs to the NAGSA dehydrogenase family. Type 2 subfamily.

It localises to the cytoplasm. It carries out the reaction N-acetyl-L-glutamate 5-semialdehyde + phosphate + NADP(+) = N-acetyl-L-glutamyl 5-phosphate + NADPH + H(+). Its pathway is amino-acid biosynthesis; L-arginine biosynthesis; N(2)-acetyl-L-ornithine from L-glutamate: step 3/4. Catalyzes the NADPH-dependent reduction of N-acetyl-5-glutamyl phosphate to yield N-acetyl-L-glutamate 5-semialdehyde. In Brucella melitensis biotype 1 (strain ATCC 23456 / CCUG 17765 / NCTC 10094 / 16M), this protein is N-acetyl-gamma-glutamyl-phosphate reductase.